The sequence spans 85 residues: uncharacterized protein (85 aa).

Disordered regions lie at residues 1-28 (MPQK…LRKA) and 35-54 (SKKK…SLTE). Over residues 35–48 (SKKKSLQHLKKLKK) the composition is skewed to basic residues.

It is found in the nucleus. This is an uncharacterized protein from Saccharomyces cerevisiae (strain ATCC 204508 / S288c) (Baker's yeast).